Here is a 357-residue protein sequence, read N- to C-terminus: Ribosomal RNA large subunit methyltransferase M (357 aa).

Residues S183, 216–219 (APGG), D235, D255, and D271 each bind S-adenosyl-L-methionine. K300 (proton acceptor) is an active-site residue.

The protein belongs to the class I-like SAM-binding methyltransferase superfamily. RNA methyltransferase RlmE family. RlmM subfamily. Monomer.

It localises to the cytoplasm. It carries out the reaction cytidine(2498) in 23S rRNA + S-adenosyl-L-methionine = 2'-O-methylcytidine(2498) in 23S rRNA + S-adenosyl-L-homocysteine + H(+). In terms of biological role, catalyzes the 2'-O-methylation at nucleotide C2498 in 23S rRNA. The chain is Ribosomal RNA large subunit methyltransferase M from Pseudomonas savastanoi pv. phaseolicola (strain 1448A / Race 6) (Pseudomonas syringae pv. phaseolicola (strain 1448A / Race 6)).